A 91-amino-acid polypeptide reads, in one-letter code: Acylphosphatase (91 aa).

An Acylphosphatase-like domain is found at 6–91 (CMRCYISGRV…WKDYISFDVL (86 aa)). Residues Arg21 and Asn39 contribute to the active site.

Belongs to the acylphosphatase family.

It carries out the reaction an acyl phosphate + H2O = a carboxylate + phosphate + H(+). The protein is Acylphosphatase (acyP) of Legionella pneumophila (strain Paris).